A 418-amino-acid chain; its full sequence is Equilibrative nucleotide transporter 6 (418 aa).

11 consecutive transmembrane segments (helical) span residues 19–39 (AMIV…SMLT), 56–76 (VLTL…AYHE), 86–106 (LIGY…DLAT), 112–132 (FGPY…DATV), 142–162 (LMCP…GALT), 186–206 (MFLA…AYVL), 264–284 (HAVN…GFLY), 291–311 (GLGA…DLVG), 326–346 (KLIT…YFTA), 353–373 (WMIM…VCIM), and 392–412 (LVIF…LWLI).

The protein belongs to the SLC29A/ENT transporter (TC 2.A.57) family. Expressed in leaves and siliques.

The protein localises to the cell membrane. Nucleoside transporter that can mediate uptake of adenosine, uridine, guanosine or cytidine when expressed in a heterologous system (yeast). The chain is Equilibrative nucleotide transporter 6 (ENT6) from Arabidopsis thaliana (Mouse-ear cress).